The following is a 278-amino-acid chain: MKLPPVFVFELVENQGLANIALIRPRVIAPDNNLRPGGIVSGIAGLLTLGQENRNLISENRQVINNNTTAIGQNSDRIDANAKGVADNRAAIGQNSGRIDANAKGVADNKAAIGRNSGRIDANAKGVADNKTAIGRNSGRIDTNAKGVADNRAAISQNRGRINANAAGVASNRAAIRQNSAAISALGQRVDGLQGQINSARKEARAGAANAAALSGLRYDNRPGKVSIATGVGGFKGSTALAAGIGYTSKNENARYNVSVAYNEAGTSWNAGASFTLN.

Residues 1–29 (MKLPPVFVFELVENQGLANIALIRPRVIA) form the signal peptide. The tract at residues 30–182 (PDNNLRPGGI…RAAIRQNSAA (153 aa)) is surface exposed passenger domain. The segment at 186 to 224 (LGQRVDGLQGQINSARKEARAGAANAAALSGLRYDNRPG) is outer membrane translocation of the passenger domain. The translocator domain stretch occupies residues 225-278 (KVSIATGVGGFKGSTALAAGIGYTSKNENARYNVSVAYNEAGTSWNAGASFTLN).

The protein belongs to the autotransporter-2 (AT-2) (TC 1.B.40) family. In terms of assembly, homotrimer.

It localises to the cell surface. It is found in the cell outer membrane. In terms of biological role, participates in bacterial attachment to several surfaces, including various extracellular matrix (ECM) components and a hydrophobic abiotic surface. Involved in adhesion to host epithelial cells and is required for full virulence in mice. Also implicated in the resistance to porcine serum. The sequence is that of Autotransporter adhesin BtaF from Brucella suis biovar 1 (strain 1330).